The chain runs to 295 residues: UDP-N-acetylenolpyruvoylglucosamine reductase (295 aa).

An FAD-binding PCMH-type domain is found at 26 to 189 (VGGRADVLFK…VEAEFKGVNS (164 aa)). The active site involves arginine 169. Cysteine 218 functions as the Proton donor in the catalytic mechanism. Glutamate 288 is an active-site residue.

It belongs to the MurB family. The cofactor is FAD.

It localises to the cytoplasm. It catalyses the reaction UDP-N-acetyl-alpha-D-muramate + NADP(+) = UDP-N-acetyl-3-O-(1-carboxyvinyl)-alpha-D-glucosamine + NADPH + H(+). Its pathway is cell wall biogenesis; peptidoglycan biosynthesis. In terms of biological role, cell wall formation. The polypeptide is UDP-N-acetylenolpyruvoylglucosamine reductase (Wolbachia pipientis wMel).